The primary structure comprises 250 residues: uncharacterized protein (250 aa).

6 4Fe-4S ferredoxin-type domains span residues 38-67 (KLLYINETKCIRCNLCYKECPVDAIEKAKV), 69-98 (KSAKIIEDKCVKCEICAQTCPVGAIYVIEG), 124-153 (KKYELDENTCIKCGICARFCPTNAIKAVRR), 154-183 (KSIEVNLDLCMGCGACAEVCPKKCIKVERE), 191-220 (RDIEVDKNLCVGCLVCIEECPINAIDQDGD), and 220-249 (DKVKINKDKCILCGRCVDVCPTNAIKMWEK). Cys-47, Cys-50, Cys-53, Cys-57, Cys-78, Cys-81, Cys-84, Cys-88, Cys-133, Cys-136, Cys-139, Cys-143, Cys-163, Cys-166, Cys-169, Cys-173, Cys-200, Cys-203, Cys-206, Cys-210, Cys-229, Cys-232, Cys-235, and Cys-239 together coordinate [4Fe-4S] cluster.

This is an uncharacterized protein from Methanocaldococcus jannaschii (strain ATCC 43067 / DSM 2661 / JAL-1 / JCM 10045 / NBRC 100440) (Methanococcus jannaschii).